The primary structure comprises 234 residues: Glucosamine-6-phosphate deaminase (234 aa).

D62 (proton acceptor; for enolization step) is an active-site residue. Catalysis depends on N128, which acts as the For ring-opening step. H130 serves as the catalytic Proton acceptor; for ring-opening step. E135 serves as the catalytic For ring-opening step.

The protein belongs to the glucosamine/galactosamine-6-phosphate isomerase family. NagB subfamily.

The enzyme catalyses alpha-D-glucosamine 6-phosphate + H2O = beta-D-fructose 6-phosphate + NH4(+). It participates in amino-sugar metabolism; N-acetylneuraminate degradation; D-fructose 6-phosphate from N-acetylneuraminate: step 5/5. Its function is as follows. Catalyzes the reversible isomerization-deamination of glucosamine 6-phosphate (GlcN6P) to form fructose 6-phosphate (Fru6P) and ammonium ion. This chain is Glucosamine-6-phosphate deaminase, found in Streptococcus pyogenes serotype M1.